The following is a 386-amino-acid chain: Microtubule-binding protein TANGLED1 (386 aa).

5 disordered regions span residues 83 to 105 (RMRGGASAQKRSPSGKFGGGVGG), 140 to 202 (AAGA…RVRS), 244 to 266 (HASTSAATDPCATPSPSKKQKRL), 303 to 330 (PARPAAVSPPPPVKAQASPAKTRRCSFS), and 345 to 386 (RLSL…ISSR). Residues 170–180 (RARRAREKQSH) are compositionally biased toward basic residues. Low complexity predominate over residues 181 to 193 (RGGAATRGADAAT). Residues 375-386 (TVRTVSSKISSR) are compositionally biased toward polar residues.

As to expression, expressed in vegetative shoot tips consisting of leaf primordia and the bases of immature leaves, the shoot apical meristem, and unexpanded stem tissue. Strongly expressed in tissues enriched in dividing cells: ear primordia and embryos.

The protein resides in the cytoplasm. It localises to the cytoskeleton. Its subcellular location is the spindle. It is found in the phragmoplast. In terms of biological role, is required for spatial control cell division during leaf development. Through an association with microtubules, acts both for the positioning of cytoskeletal arrays that establish planes of cell division during prophase and for spatial guidance of expanding phragmoplasts toward preestablished cortical division sites (CDS) during cytokinesis. The sequence is that of Microtubule-binding protein TANGLED1 (TAN1) from Zea mays (Maize).